The sequence spans 258 residues: Adenylate kinase (258 aa).

52–57 (GAGKGT) lines the ATP pocket. The interval 72 to 101 (ATGDMLRSQVAKKTALGKEAKKIMDQGGLV) is NMP. Residues T73, R78, 99 to 101 (GLV), 128 to 131 (GFPR), and Q135 contribute to the AMP site. Positions 169–206 (GRLVHPASGRSYHKIFNPPKEEMKDDVTGEPLIQRSDD) are LID. ATP is bound by residues R170 and 179–180 (SY). AMP is bound by residues R203 and R214. Q242 is an ATP binding site.

Belongs to the adenylate kinase family. AK2 subfamily. Monomer.

Its subcellular location is the cytoplasm. It localises to the cytosol. It is found in the mitochondrion intermembrane space. It catalyses the reaction AMP + ATP = 2 ADP. Functionally, catalyzes the reversible transfer of the terminal phosphate group between ATP and AMP. Plays an important role in cellular energy homeostasis and in adenine nucleotide metabolism. Adenylate kinase activity is critical for regulation of the phosphate utilization and the AMP de novo biosynthesis pathways. The sequence is that of Adenylate kinase (adk1) from Aspergillus niger (strain ATCC MYA-4892 / CBS 513.88 / FGSC A1513).